The primary structure comprises 872 residues: DNA mismatch repair protein MutS (872 aa).

622–629 (GPNMAGKS) lines the ATP pocket.

The protein belongs to the DNA mismatch repair MutS family.

Functionally, this protein is involved in the repair of mismatches in DNA. It is possible that it carries out the mismatch recognition step. This protein has a weak ATPase activity. In Geotalea uraniireducens (strain Rf4) (Geobacter uraniireducens), this protein is DNA mismatch repair protein MutS.